A 471-amino-acid polypeptide reads, in one-letter code: GTPase Der (471 aa).

EngA-type G domains follow at residues 5–168 and 186–359; these read PVIA…TDLE and IRVA…DSAF. Residues 11 to 18, 58 to 62, 120 to 123, 192 to 199, 239 to 243, and 304 to 307 each bind GTP; these read GRPNVGKS, DTGGI, NKTD, DTAGV, and NKWD. Residues 360 to 444 form the KH-like domain; the sequence is IKIGTNELTR…PIRLEFKSGT (85 aa).

It belongs to the TRAFAC class TrmE-Era-EngA-EngB-Septin-like GTPase superfamily. EngA (Der) GTPase family. As to quaternary structure, associates with the 50S ribosomal subunit.

GTPase that plays an essential role in the late steps of ribosome biogenesis. This is GTPase Der from Alcanivorax borkumensis (strain ATCC 700651 / DSM 11573 / NCIMB 13689 / SK2).